The chain runs to 967 residues: MSQNTSYRLPAEQSPAARIDRGEALVLTVDGKQLEAFRGDTVASAMLANGQRACGNSMYLDRPRGIFSAGVEEPNALVTVEARHEQDINESMLAATTVPVTANLSATLLRGLGVLDPSTDPAYYDHVHVHTDVLVVGAGPAGLAAAREASRSGARVLLLDERAEAGGSLRDAAGEQIDGQDAAAWIDATVAELAAAEETTHLQRTTVLGSYDANYVVAVQRRTVHLDGPSGAGVSRERIWHIRANQVVLATGAHERPIVFENNDRPGIMLAGAVRSYLNCYGVRAGSQIVVATTNDSAYPLVADLAASGGVVAVIDARTTVSAAAAEAVGAGVRVITGSVVVDTEANESGELSAVIVAELGEDRELGEPQRFEADVLAVAGGFNPVVHLHSQRQGKLVWDTSIHAFVPDAAVANQHLAGALTGLFDTASALSTGAAVGAAAATAAGFERIAQVPQALPVPAGETRPVWLVPSLNGDQATNYTTHFVDLQRDQTVSDVLRATGAGLESVEHIKRYTSISTANDQGKTSGVAAIGVIAAVLGIENPAEIGTTTFRAPYTPVAFAALAGRTRGELLDPARITPMHSWHLAQGAKFEDVGQWKRAWYFPQDGEDMDAAVYRECAAVRESVGMLDATTLGKIEIRGADAAEFLNRIYTNGYTKLKVGMARYGVMCKADGMVFDDGVTLRLAEDRFLMHTTTGGAAGVLDWLEEWLQTEWPELDVTCTSVTEQLATVAVVGPRSRDVVAKLVTGLDVSNDAFKFMSFQDVTLDSGIEARISRISFSGELAYEIAIPSWHGLRVWEDVYAAGQEFNITPYGTETMHVLRAEKGFIIVGQDTDGTVTPQDAGMEWVVSKLKDFVGKRSFSREDNLREDRKHLVSVLPVDTALRLAEGAALVADGAVETEGCTPMEGWVTSSYNSPALGRTFGLALIKNGRSRIGEVLKTPVNGQLVDVLVSDLVLFDPEGSRRDG.

NAD(+)-binding residues include Ala141, Asp160, Glu161, Arg162, Ser168, Val207, Ala420, and Thr427. (6R)-5,10-methylene-5,6,7,8-tetrahydrofolate is bound by residues Thr694 and Glu786.

It belongs to the GcvT family. Heterotetramer composed of subunits alpha (SoxA), beta (SoxB), gamma (SoxG) and delta (SoxD). NAD(+) is required as a cofactor.

It localises to the cytoplasm. The catalysed reaction is sarcosine + (6S)-5,6,7,8-tetrahydrofolate + O2 = (6R)-5,10-methylene-5,6,7,8-tetrahydrofolate + glycine + H2O2. The enzyme catalyses sarcosine + O2 + H2O = formaldehyde + glycine + H2O2. Functionally, in the presence of tetrahydrofolate, catalyzes the oxidative demethylation of sarcosine to yield glycine, 5,10-methylenetetrahydrofolate and hydrogen peroxide. In the absence of tetrahydrofolate, catalyzes the oxidative demethylation of sarcosine to yield glycine, formaldehyde and hydrogen peroxide. The sequence is that of Sarcosine oxidase subunit alpha from Corynebacterium sp. (strain P-1).